We begin with the raw amino-acid sequence, 123 residues long: Protein Wnt-7 (123 aa).

Ser-1 is lipidated: O-palmitoleoyl serine; by PORCN. N-linked (GlcNAc...) asparagine glycosylation is found at Asn-79 and Asn-90. A disulfide bond links Cys-89 and Cys-104.

This sequence belongs to the Wnt family. In terms of processing, palmitoleoylation is required for efficient binding to frizzled receptors. Depalmitoleoylation leads to Wnt signaling pathway inhibition.

It localises to the secreted. The protein resides in the extracellular space. Its subcellular location is the extracellular matrix. In terms of biological role, ligand for members of the frizzled family of seven transmembrane receptors. Probable developmental protein. May be a signaling molecule which affects the development of discrete regions of tissues. Is likely to signal over only few cell diameters. The protein is Protein Wnt-7 (WNT-7) of Strongylocentrotus purpuratus (Purple sea urchin).